Consider the following 62-residue polypeptide: Sperm protamine P1 (62 aa).

The disordered stretch occupies residues methionine 1–tyrosine 62.

Belongs to the protamine P1 family. In terms of tissue distribution, testis.

The protein localises to the nucleus. Its subcellular location is the chromosome. In terms of biological role, protamines substitute for histones in the chromatin of sperm during the haploid phase of spermatogenesis. They compact sperm DNA into a highly condensed, stable and inactive complex. This is Sperm protamine P1 (PRM1) from Dendrolagus dorianus (Doria's tree-kangaroo).